The chain runs to 342 residues: Tetraacyldisaccharide 4'-kinase (342 aa).

68-75 (TVGGTGKT) is an ATP binding site.

It belongs to the LpxK family.

It catalyses the reaction a lipid A disaccharide + ATP = a lipid IVA + ADP + H(+). It participates in glycolipid biosynthesis; lipid IV(A) biosynthesis; lipid IV(A) from (3R)-3-hydroxytetradecanoyl-[acyl-carrier-protein] and UDP-N-acetyl-alpha-D-glucosamine: step 6/6. Its function is as follows. Transfers the gamma-phosphate of ATP to the 4'-position of a tetraacyldisaccharide 1-phosphate intermediate (termed DS-1-P) to form tetraacyldisaccharide 1,4'-bis-phosphate (lipid IVA). The chain is Tetraacyldisaccharide 4'-kinase from Burkholderia thailandensis (strain ATCC 700388 / DSM 13276 / CCUG 48851 / CIP 106301 / E264).